Reading from the N-terminus, the 126-residue chain is Cystatin-C (126 aa).

The N-terminal stretch at 1 to 18 is a signal peptide; sequence MKMLVFPVLAALFAVGLG. Positions 22 to 115 constitute a Cystatin domain; the sequence is GAPRDINISE…CTFSVWSRPW (94 aa). Positions 64–68 match the Secondary area of contact motif; it reads QVVSG. Cystine bridges form between cysteine 82/cysteine 92 and cysteine 106/cysteine 126.

Belongs to the cystatin family. As to expression, ubiquitously expressed in normal tissues including brain, eye, gill, heart, gullet, liver, spleen, stomach, pyloric ceca, intestine, kidney and muscle. Expressed, but not up-regulated, in lipopolysaccharide (LPS)-stimulated tissues including kidney, spleen, muscle and gill.

Its subcellular location is the secreted. Thiol protease inhibitor. Has high papain inhibitory activity and inhibits to a lesser extent fish cathepsins L, S, K, F, X and bovine cathepsin B in vitro. The polypeptide is Cystatin-C (Paralichthys olivaceus (Bastard halibut)).